The sequence spans 130 residues: Small ribosomal subunit protein uS8 (130 aa).

The protein belongs to the universal ribosomal protein uS8 family. In terms of assembly, part of the 30S ribosomal subunit. Contacts proteins S5 and S12.

Functionally, one of the primary rRNA binding proteins, it binds directly to 16S rRNA central domain where it helps coordinate assembly of the platform of the 30S subunit. In Coxiella burnetii (strain Dugway 5J108-111), this protein is Small ribosomal subunit protein uS8.